A 460-amino-acid polypeptide reads, in one-letter code: Ammonium transporter Rh type B (460 aa).

Over 1–10 the chain is Cytoplasmic; sequence MTGYSTNMRI. Residues 11 to 31 traverse the membrane as a helical segment; sequence KLPVFCLLLEFITIILFAVFV. Residues 32–62 are Extracellular-facing; it reads RYDHESDAKQWHDEMRNHSVQNAENDFYFRY. N48 is a glycosylation site (N-linked (GlcNAc...) asparagine). A helical membrane pass occupies residues 63-83; sequence PSFQDVHVMIFIGFGFLMTFL. The Cytoplasmic portion of the chain corresponds to 84–87; the sequence is KRYG. A helical membrane pass occupies residues 88–108; that stretch reads FSSVAFNFLIAAFGLQWSTLI. At 109–125 the chain is on the extracellular side; it reads QGFFHGFHDGKIHVGIE. The chain crosses the membrane as a helical span at residues 126–146; the sequence is SMINADFCTGAVLISFGAVLG. The Cytoplasmic segment spans residues 147 to 150; that stretch reads KTSP. The chain crosses the membrane as a helical span at residues 151–171; the sequence is VQLIVMTLIEVTLFGINEYII. Residues 172–179 are Extracellular-facing; the sequence is LNIVGAKD. Residues 180-202 form a helical membrane-spanning segment; it reads AGGSMTIHTFGAYFGLIVSRVLY. Residues 203–220 lie on the Cytoplasmic side of the membrane; it reads RDDLEKSRQREGSVYHSD. Residues 221–241 form a helical membrane-spanning segment; sequence LFAMIGTIYLWMFWPSFNSAI. Topologically, residues 242–252 are extracellular; it reads TAHGDDQHRTV. Residues 253–273 form a helical membrane-spanning segment; the sequence is MNTYYSLAACTLATFGFSALL. At 274-283 the chain is on the cytoplasmic side; sequence NGEGKLDMVH. The helical transmembrane segment at 284–304 threads the bilayer; sequence IQNAALAGGVAVGTSGEMMLT. P305 is a topological domain (extracellular). The helical transmembrane segment at 306–326 threads the bilayer; the sequence is FGAMIAGTLAGMISVLGYKYL. Residues 327–347 lie on the Cytoplasmic side of the membrane; that stretch reads TPVLDSKLKIQDTCGVHNLHG. The helical transmembrane segment at 348–368 threads the bilayer; sequence MPGILGALIGAIVALFATAEI. Residues 369–394 lie on the Extracellular side of the membrane; that stretch reads YGAGMEDVFPLISDGSRTAKQQSLYQ. The helical transmembrane segment at 395–415 threads the bilayer; the sequence is FLALLVALGFAILGGLVVGFI. The Cytoplasmic portion of the chain corresponds to 416–460; that stretch reads LKLPIFGTPSDAECFEDAVYWEVPGGEGHQQLTVVINNEDPDTQA.

Belongs to the ammonium transporter (TC 2.A.49) family. Rh subfamily.

The protein resides in the basolateral cell membrane. The protein localises to the cytoplasmic vesicle membrane. Its function is as follows. Functions as a specific ammonium transporter. This chain is Ammonium transporter Rh type B (rhbg), found in Xenopus tropicalis (Western clawed frog).